A 326-amino-acid polypeptide reads, in one-letter code: Zinc-dependent endopolyphosphatase (326 aa).

Over 1-9 (MEDKRKRRA) the chain is Cytoplasmic. A helical membrane pass occupies residues 10–30 (ATLSTALILFVACCVYTLYIF). The Vacuolar segment spans residues 31–326 (KFDNPRLSPP…DYELIQVQCS (296 aa)). Residues Asn-90 and Asn-241 are each glycosylated (N-linked (GlcNAc...) asparagine).

Belongs to the metallophosphoesterase superfamily. As to quaternary structure, interacts with PPN1. Requires Zn(2+) as cofactor. The cofactor is Co(2+). Mg(2+) is required as a cofactor.

It localises to the vacuole membrane. It carries out the reaction [phosphate](n+1) + n H2O = (n+1) phosphate + n H(+). With respect to regulation, not sensitive to heparin inhibition. Catalyzes the hydrolysis of inorganic polyphosphate (polyP) chains of many hundreds of phosphate residues into shorter lengths. Exclusively shows endopolyphosphatase activity, cleaving inside the polyP chain. Together with PPN1, responsible for a substantial fraction of polyphosphatase activity that is necessary to mobilize polyP stores in response to phosphate scarcity. This chain is Zinc-dependent endopolyphosphatase, found in Saccharomyces cerevisiae (strain ATCC 204508 / S288c) (Baker's yeast).